The primary structure comprises 164 residues: Transcription factor MafF (164 aa).

Positions 51 to 76 (RLKQRRRTLKNRGYAASCRVKRVCQK) are basic motif. Residues 51–114 (RLKQRRRTLK…DALRGKCEAL (64 aa)) enclose the bZIP domain. The segment at 79-93 (LQKQKSELEREVDKL) is leucine-zipper. Residues 141–164 (KSTPGSGSGPAHGPDPAHGPASCS) are disordered. A compositionally biased stretch (low complexity) spans 149-164 (GPAHGPDPAHGPASCS).

It belongs to the bZIP family. Maf subfamily. As to quaternary structure, monomer and homo- or heterodimer. Interacts with MIP. Forms high affinity heterodimers with members of the CNC-bZIP family such as NFE2L1/NRF1. As to expression, expressed in the term myometrium and kidney.

It is found in the nucleus. In terms of biological role, since they lack a putative transactivation domain, the small Mafs behave as transcriptional repressors when they dimerize among themselves. However, they seem to serve as transcriptional activators by dimerizing with other (usually larger) basic-zipper proteins, such as NFE2L1/NRF1, and recruiting them to specific DNA-binding sites. Interacts with the upstream promoter region of the oxytocin receptor gene. May be a transcriptional enhancer in the up-regulation of the oxytocin receptor gene at parturition. The polypeptide is Transcription factor MafF (MAFF) (Homo sapiens (Human)).